A 123-amino-acid chain; its full sequence is Putative EG45-like domain containing protein 1 (123 aa).

The signal sequence occupies residues 1–21 (MSKSIVFFSTVLVFLFSFSYA). Residues 24-123 (GIATFYTSYT…AGIINIDYFP (100 aa)) enclose the Expansin-like EG45 domain.

Its subcellular location is the secreted. Functionally, might have a systemic role in water and solute homeostasis. This Arabidopsis thaliana (Mouse-ear cress) protein is Putative EG45-like domain containing protein 1 (EGC1).